A 175-amino-acid chain; its full sequence is Urease accessory protein UreE (175 aa).

The disordered stretch occupies residues 134–175; that stretch reads FQPESGAYGGGHHHGDESATDLHNPGHGPHRSVPKIHEFKPR.

The protein belongs to the UreE family.

The protein localises to the cytoplasm. Involved in urease metallocenter assembly. Binds nickel. Probably functions as a nickel donor during metallocenter assembly. The sequence is that of Urease accessory protein UreE from Dechloromonas aromatica (strain RCB).